The following is a 484-amino-acid chain: Probable autolysin PH (484 aa).

The Peptidase C51 domain maps to 5-148; sequence KNQAEKWFDN…YYDDPMYFIR (144 aa). The MurNAc-LAA domain occupies 181-363; sequence IMLVAGHGYN…YSKLIAGAIH (183 aa). Residues 402-472 enclose the SH3b domain; that stretch reads KETGYYTVAN…IATGEVDKAG (71 aa).

The catalysed reaction is Hydrolyzes the link between N-acetylmuramoyl residues and L-amino acid residues in certain cell-wall glycopeptides.. Its function is as follows. Has weak lytic activity toward S.aureus cells. Full-length protein has no activity, but fusion of the Peptidase C51 domain to the lysostaphin SH3 cell wall binding domain yields an active chimeric enzyme, suggesting that PH may be functional. The polypeptide is Probable autolysin PH (Staphylococcus aureus (strain NCTC 8325 / PS 47)).